Consider the following 249-residue polypeptide: 2,3-bisphosphoglycerate-dependent phosphoglycerate mutase (249 aa).

Substrate contacts are provided by residues 9 to 16, 22 to 23, R61, 88 to 91, K99, 115 to 116, and 184 to 185; these read RHGQSQWN, TG, ERHY, RR, and GN. Catalysis depends on H10, which acts as the Tele-phosphohistidine intermediate. The active-site Proton donor/acceptor is the E88.

It belongs to the phosphoglycerate mutase family. BPG-dependent PGAM subfamily. In terms of assembly, homodimer.

It carries out the reaction (2R)-2-phosphoglycerate = (2R)-3-phosphoglycerate. The protein operates within carbohydrate degradation; glycolysis; pyruvate from D-glyceraldehyde 3-phosphate: step 3/5. In terms of biological role, catalyzes the interconversion of 2-phosphoglycerate and 3-phosphoglycerate. This Xylella fastidiosa (strain M12) protein is 2,3-bisphosphoglycerate-dependent phosphoglycerate mutase.